Consider the following 473-residue polypeptide: Trigger factor (473 aa).

One can recognise a PPIase FKBP-type domain in the interval 174–261; the sequence is GDIAVVSFKG…LKDLKEKELP (88 aa). The disordered stretch occupies residues 437 to 473; sequence EISEKVTKSTTKSKTKSKTKKESQAKSEPNKKKKEKK. Basic and acidic residues predominate over residues 456–466; sequence KKESQAKSEPN.

The protein belongs to the FKBP-type PPIase family. Tig subfamily.

It localises to the cytoplasm. It carries out the reaction [protein]-peptidylproline (omega=180) = [protein]-peptidylproline (omega=0). Involved in protein export. Acts as a chaperone by maintaining the newly synthesized protein in an open conformation. Functions as a peptidyl-prolyl cis-trans isomerase. The sequence is that of Trigger factor from Prochlorococcus marinus (strain MIT 9515).